The sequence spans 895 residues: Androgen receptor (895 aa).

Residues 1-533 (MEVQLGLGRV…PIDYYFPPQK (533 aa)) form a modulating region. Residues 1–562 (MEVQLGLGRV…GSCKVFFKRA (562 aa)) are interaction with ZNF318. Disordered stretches follow at residues 33–155 (VIQN…PTFP) and 175–211 (QLLQQQQQEAVSEGSSSGRAREASGAPTSSKDNYLGG). Low complexity-rich tracts occupy residues 44–81 (AASAAPPGASLQQQQQQQQQETSPRQQQQQQGEDGSPQ) and 175–200 (QLLQQQQQEAVSEGSSSGRAREASGA). S66 carries the phosphoserine; by CDK9 modification. S79 bears the Phosphoserine mark. The segment covering 201–211 (PTSSKDNYLGG) has biased composition (polar residues). Y208 carries the phosphotyrosine; by CSK modification. Residue S241 is modified to Phosphoserine. Y252 bears the Phosphotyrosine; by CSK and TNK2 mark. A phosphotyrosine; by CSK mark is found at Y292, Y331, Y342, and Y347. The residue at position 348 (Y348) is a Phosphotyrosine; by CSK and TNK2. Residue K371 forms a Glycyl lysine isopeptide (Lys-Gly) (interchain with G-Cter in SUMO) linkage. Y378 is subject to Phosphotyrosine; by CSK. A Glycyl lysine isopeptide (Lys-Gly) (interchain with G-Cter in SUMO) cross-link involves residue K496. Residues Y510 and Y527 each carry the phosphotyrosine; by CSK modification. Residues 527-894 (YYFPPQKTCL…GKVKPIYFHT (368 aa)) form an interaction with LPXN region. The nuclear receptor DNA-binding region spans 534 to 607 (TCLICGDEAS…AGMTLGARKL (74 aa)). 2 consecutive NR C4-type zinc fingers follow at residues 535 to 555 (CLICGDEASGCHYGALTCGSC) and 571 to 595 (CASRNDCTIDKFRRKNCPSCRLRKC). The segment at 547–637 (YGALTCGSCK…TEETAQKLTV (91 aa)) is interaction with HIPK3. The interaction with CCAR1 stretch occupies residues 567–894 (QKYLCASRND…GKVKPIYFHT (328 aa)). The interval 600-894 (MTLGARKLKK…GKVKPIYFHT (295 aa)) is interaction with KAT7. S626 carries the post-translational modification Phosphoserine; by STK4/MST1. The NR LBD domain maps to 644–875 (ECQPIFLNVL…DFPEMMAEII (232 aa)). Residues N681 and R728 each contribute to the 17beta-hydroxy-5alpha-androstan-3-one site. Residues K821 and K823 each participate in a glycyl lysine isopeptide (Lys-Gly) (interchain with G-Cter in ubiquitin) cross-link. T853 is a 17beta-hydroxy-5alpha-androstan-3-one binding site. Position 891 is a phosphotyrosine; by CSK (Y891).

This sequence belongs to the nuclear hormone receptor family. NR3 subfamily. In terms of assembly, binds DNA as a homodimer. Part of a ternary complex containing AR, EFCAB6/DJBP and PARK7. Interacts with HIPK3 and NR0B2 in the presence of androgen. The ligand binding domain interacts with KAT7/HBO1 in the presence of dihydrotestosterone. Interacts with EFCAB6/DJBP, PQBP1, RANBP9, RBAK, SPDEF, SRA1, TGFB1I1 and RREB1. Interacts with ZMIZ1/ZIMP10 and ZMIZ2/ZMIP7 which both enhance its transactivation activity. Interacts with SLC30A9 and RAD54L2/ARIP4. Interacts with MACROD1 (via macro domain). Interacts via the ligand-binding domain with LXXLL and FXXLF motifs from NCOA1, NCOA2, NCOA3 and MAGEA11. Interacts (via nuclear receptor DNA binding domain and nuclear receptor ligand binding domain) with NCOA4. The AR N-terminal poly-Gln region binds Ran resulting in enhancement of AR-mediated transactivation. Ran-binding decreases as the poly-Gln length increases. Interacts with HIP1 (via coiled coil domain). Interacts (via ligand-binding domain) with TRIM68. Interacts with TNK2. Interacts with USP26. Interacts with RNF6. Interacts (regulated by RNF6 probably through polyubiquitination) with RNF14; regulates AR transcriptional activity. Interacts with PRMT2 and TRIM24. Interacts with RACK1. Interacts with RANBP10; this interaction enhances dihydrotestosterone-induced AR transcriptional activity. Interacts with PRPF6 in a hormone-independent way; this interaction enhances dihydrotestosterone-induced AR transcriptional activity. Interacts with STK4/MST1. Interacts with ZIPK/DAPK3. Interacts with LPXN. Interacts with MAK. Part of a complex containing AR, MAK and NCOA3. Interacts with CRY1. Interacts with CCAR1 and GATA2. Interacts with ZNF318. Interacts with BUD31. Interacts with ARID4A. Interacts with ARID4B. Interacts (via NR LBD domain) with ZBTB7A; the interaction is direct and androgen-dependent. Interacts with NCOR1. Interacts with NCOR2. Interacts with CRY2 in a ligand-dependent manner. Post-translationally, phosphorylated in prostate cancer cells in response to several growth factors including EGF. Phosphorylation is induced by c-Src kinase (CSK). Tyr-510 is one of the major phosphorylation sites and an increase in phosphorylation and Src kinase activity is associated with prostate cancer progression. Phosphorylation by TNK2 enhances the DNA-binding and transcriptional activity. Phosphorylation at Ser-66 by CDK9 regulates AR promoter selectivity and cell growth. Sumoylated on Lys-371 (major) and Lys-496. Ubiquitinated. Deubiquitinated by USP26. 'Lys-6' and 'Lys-27'-linked polyubiquitination by RNF6 modulates AR transcriptional activity and specificity. In terms of processing, palmitoylated by ZDHHC7 and ZDHHC21. Palmitoylation is required for plasma membrane targeting and for rapid intracellular signaling via ERK and AKT kinases and cAMP generation.

The protein localises to the nucleus. The protein resides in the cytoplasm. Steroid hormone receptors are ligand-activated transcription factors that regulate eukaryotic gene expression and affect cellular proliferation and differentiation in target tissues. Transcription factor activity is modulated by bound coactivator and corepressor proteins like ZBTB7A that recruits NCOR1 and NCOR2 to the androgen response elements/ARE on target genes, negatively regulating androgen receptor signaling and androgen-induced cell proliferation. Transcription activation is also down-regulated by NR0B2. Activated, but not phosphorylated, by HIPK3 and ZIPK/DAPK3. This chain is Androgen receptor (AR), found in Papio hamadryas (Hamadryas baboon).